We begin with the raw amino-acid sequence, 205 residues long: Thymidine kinase (205 aa).

ATP is bound by residues 9–16 (SAMNAGKS) and 87–90 (DECQ). The active-site Proton acceptor is Glu-88. Zn(2+)-binding residues include Cys-145, Cys-147, Cys-182, and His-185.

Belongs to the thymidine kinase family. In terms of assembly, homotetramer.

It localises to the cytoplasm. It catalyses the reaction thymidine + ATP = dTMP + ADP + H(+). Its activity is regulated as follows. Allosteric enzyme which is feedback inhibited by dTTP and activated by a number of dNDP and dNTP. In terms of biological role, phosphorylates both thymidine and deoxyuridine. The polypeptide is Thymidine kinase (Escherichia coli O157:H7).